The chain runs to 150 residues: Small ribosomal subunit protein eS19 (150 aa).

This sequence belongs to the eukaryotic ribosomal protein eS19 family. Part of the 30S ribosomal subunit.

Functionally, may be involved in maturation of the 30S ribosomal subunit. The protein is Small ribosomal subunit protein eS19 of Thermoplasma volcanium (strain ATCC 51530 / DSM 4299 / JCM 9571 / NBRC 15438 / GSS1).